The chain runs to 78 residues: MNYKVFCLVAIALIVGSIGSANGQAAFTEEQCSVERLARVNCGYSGITPQECTKQGCCFDSTIQDAPWCFYPRATPEY.

Positions 1–23 are cleaved as a signal peptide; that stretch reads MNYKVFCLVAIALIVGSIGSANG. Residues 30-73 enclose the P-type domain; that stretch reads EQCSVERLARVNCGYSGITPQECTKQGCCFDSTIQDAPWCFYPR. Cystine bridges form between C32/C58, C42/C57, and C52/C69.

In terms of tissue distribution, stomach mucosa.

Its subcellular location is the secreted. Its function is as follows. May act as a growth factor. The protein is Putative gastrointestinal growth factor xP1 (p1) of Xenopus laevis (African clawed frog).